The chain runs to 295 residues: Elongation factor Ts (295 aa).

The tract at residues 79–82 (TDFV) is involved in Mg(2+) ion dislocation from EF-Tu.

Belongs to the EF-Ts family.

The protein resides in the cytoplasm. Associates with the EF-Tu.GDP complex and induces the exchange of GDP to GTP. It remains bound to the aminoacyl-tRNA.EF-Tu.GTP complex up to the GTP hydrolysis stage on the ribosome. The protein is Elongation factor Ts of Bacillus cereus (strain ATCC 10987 / NRS 248).